The chain runs to 176 residues: Small ribosomal subunit protein uS5 (176 aa).

The region spanning 11 to 74 is the S5 DRBM domain; the sequence is LSEVLVDVNR…QAAKKRMMKV (64 aa).

This sequence belongs to the universal ribosomal protein uS5 family. In terms of assembly, part of the 30S ribosomal subunit. Contacts proteins S4 and S8.

Functionally, with S4 and S12 plays an important role in translational accuracy. Located at the back of the 30S subunit body where it stabilizes the conformation of the head with respect to the body. This Rickettsia rickettsii (strain Iowa) protein is Small ribosomal subunit protein uS5.